Reading from the N-terminus, the 893-residue chain is UPF0182 protein CLK_3152 (893 aa).

The next 7 membrane-spanning stretches (helical) occupy residues 9 to 29 (IPLF…NFII), 49 to 69 (AIII…WMYY), 94 to 114 (LFFI…SSSY), 154 to 174 (VIIS…FILE), 202 to 222 (LAIV…IKIW), 246 to 266 (FYKI…LSIV), and 273 to 293 (VSIC…ASFL).

Belongs to the UPF0182 family.

The protein localises to the cell membrane. The chain is UPF0182 protein CLK_3152 from Clostridium botulinum (strain Loch Maree / Type A3).